A 463-amino-acid chain; its full sequence is Glutamyl-tRNA reductase (463 aa).

Residues 49–52 (TCNR), Ser-109, 114–116 (EQQ), and Gln-120 each bind substrate. Cys-50 (nucleophile) is an active-site residue. 196-201 (GAGAMS) serves as a coordination point for NADP(+).

This sequence belongs to the glutamyl-tRNA reductase family. As to quaternary structure, homodimer.

The catalysed reaction is (S)-4-amino-5-oxopentanoate + tRNA(Glu) + NADP(+) = L-glutamyl-tRNA(Glu) + NADPH + H(+). It participates in porphyrin-containing compound metabolism; protoporphyrin-IX biosynthesis; 5-aminolevulinate from L-glutamyl-tRNA(Glu): step 1/2. In terms of biological role, catalyzes the NADPH-dependent reduction of glutamyl-tRNA(Glu) to glutamate 1-semialdehyde (GSA). This is Glutamyl-tRNA reductase from Corynebacterium glutamicum (strain R).